Reading from the N-terminus, the 352-residue chain is C-C chemokine receptor type 5 (352 aa).

At Met1 to Ala30 the chain is on the extracellular side. At Tyr3 the chain carries Sulfotyrosine. O-linked (GalNAc...) serine glycosylation is found at Ser6 and Ser7. Tyr10, Tyr14, and Tyr15 each carry sulfotyrosine. 2 disulfide bridges follow: Cys20-Cys269 and Cys101-Cys178. The chain crosses the membrane as a helical span at residues Arg31–Cys58. Over Lys59 to Tyr68 the chain is Cytoplasmic. A helical membrane pass occupies residues Leu69–Tyr89. The Extracellular segment spans residues Ala90–Gln102. A helical transmembrane segment spans residues Leu103–Ile124. Residues Asp125–Thr141 lie on the Cytoplasmic side of the membrane. The chain crosses the membrane as a helical span at residues Val142–Phe166. Residues Thr167–Ile198 are Extracellular-facing. Residues Val199–Leu218 form a helical membrane-spanning segment. The Cytoplasmic segment spans residues Lys219–Arg235. Residues Leu236–Phe260 form a helical membrane-spanning segment. The Extracellular segment spans residues Gln261 to Gln277. Residues Ala278–Gly301 form a helical membrane-spanning segment. The Cytoplasmic segment spans residues Glu302–Leu352. Residues Cys321, Cys323, and Cys324 are each lipidated (S-palmitoyl cysteine). Phosphoserine; by BARK1 occurs at positions 336, 337, and 342.

The protein belongs to the G-protein coupled receptor 1 family. In terms of assembly, interacts with PRAF2. Efficient ligand binding to CCL3/MIP-1alpha and CCL4/MIP-1beta requires sulfation, O-glycosylation and sialic acid modifications. Glycosylation on Ser-6 is required for efficient binding of CCL4. Interacts with GRK2. Interacts with ARRB1 and ARRB2. Interacts with CNIH4. Interacts with S100A4; this interaction stimulates T-lymphocyte chemotaxis. In terms of processing, sulfated on at least 2 of the N-terminal tyrosines. Sulfation is required for efficient binding of the chemokines, CCL3 and CCL4. Post-translationally, palmitoylation in the C-terminal is important for cell surface expression. Phosphorylation on serine residues in the C-terminal is stimulated by binding CC chemokines especially by APO-RANTES. In terms of processing, O-glycosylated, but not N-glycosylated. Ser-6 appears to be the major site even if Ser-7 may be also O-glycosylated. Also sialylated glycans present which contribute to chemokine binding. Thr-16 and Ser-17 may also be glycosylated and, if so, with small moieties such as a T-antigen.

The protein localises to the cell membrane. Receptor for a number of inflammatory CC-chemokines including CCL3/MIP-1-alpha, CCL4/MIP-1-beta and RANTES and subsequently transduces a signal by increasing the intracellular calcium ion level. May play a role in the control of granulocytic lineage proliferation or differentiation. Participates in T-lymphocyte migration to the infection site by acting as a chemotactic receptor. The chain is C-C chemokine receptor type 5 (CCR5) from Allochrocebus solatus (Sun-tailed monkey).